We begin with the raw amino-acid sequence, 57 residues long: Cytochrome b-c1 complex subunit 10, mitochondrial (57 aa).

At 1-23 (MAGTSGLLNAVKPKIQTIDIQAA) the chain is on the mitochondrial matrix side. The chain crosses the membrane as a helical span at residues 24-44 (AGWGIAAAAGAIWVVQPFGWI). Residues 45-57 (KKTFIDPPPTEEK) are Mitochondrial intermembrane-facing.

The protein belongs to the UQCR11/QCR10 family. As to quaternary structure, component of the ubiquinol-cytochrome c oxidoreductase (cytochrome b-c1 complex, complex III, CIII), a multisubunit enzyme composed of 10 subunits. The complex is composed of 3 respiratory subunits cytochrome b (MT-CYB), cytochrome c1 (CYC1-1 or CYC1-2) and Rieske protein (UCR1-1 or UCR1-2), 2 core protein subunits MPPalpha1 (or MPPalpha2) and MPPB, and 5 low-molecular weight protein subunits QCR7-1 (or QCR7-2), UCRQ-1 (or UCRQ-2), QCR9, UCRY and probably QCR6-1 (or QCR6-2). The complex exists as an obligatory dimer and forms supercomplexes (SCs) in the inner mitochondrial membrane with NADH-ubiquinone oxidoreductase (complex I, CI), resulting in different assemblies (supercomplexes SCI(1)III(2) and SCI(2)III(4)).

The protein localises to the mitochondrion inner membrane. Component of the ubiquinol-cytochrome c oxidoreductase, a multisubunit transmembrane complex that is part of the mitochondrial electron transport chain which drives oxidative phosphorylation. The respiratory chain contains 3 multisubunit complexes succinate dehydrogenase (complex II, CII), ubiquinol-cytochrome c oxidoreductase (cytochrome b-c1 complex, complex III, CIII) and cytochrome c oxidase (complex IV, CIV), that cooperate to transfer electrons derived from NADH and succinate to molecular oxygen, creating an electrochemical gradient over the inner membrane that drives transmembrane transport and the ATP synthase. The cytochrome b-c1 complex catalyzes electron transfer from ubiquinol to cytochrome c, linking this redox reaction to translocation of protons across the mitochondrial inner membrane, with protons being carried across the membrane as hydrogens on the quinol. In the process called Q cycle, 2 protons are consumed from the matrix, 4 protons are released into the intermembrane space and 2 electrons are passed to cytochrome c. The polypeptide is Cytochrome b-c1 complex subunit 10, mitochondrial (UCRY) (Arabidopsis thaliana (Mouse-ear cress)).